Here is a 206-residue protein sequence, read N- to C-terminus: uncharacterized protein (206 aa).

The chain crosses the membrane as a helical span at residues 21–43 (VPINITMSICALTALLKSYSITG).

The protein resides in the membrane. This is an uncharacterized protein from Acanthamoeba polyphaga (Amoeba).